The chain runs to 208 residues: V-type ATP synthase subunit D (208 aa).

This sequence belongs to the V-ATPase D subunit family.

Its function is as follows. Produces ATP from ADP in the presence of a proton gradient across the membrane. This Streptococcus pyogenes serotype M1 protein is V-type ATP synthase subunit D.